Here is a 150-residue protein sequence, read N- to C-terminus: Large ribosomal subunit protein bL9 (150 aa).

Belongs to the bacterial ribosomal protein bL9 family.

In terms of biological role, binds to the 23S rRNA. This chain is Large ribosomal subunit protein bL9, found in Burkholderia multivorans (strain ATCC 17616 / 249).